Consider the following 62-residue polypeptide: MPRMVRCSFCGREIEPGTGIMYVKNDGSILWFCSRKCYKNYLLLRRDPRKLKWTLKYGSQTK.

Zn(2+)-binding residues include C7, C10, C33, and C37. The C4-type zinc finger occupies 7–37; it reads CSFCGREIEPGTGIMYVKNDGSILWFCSRKC.

It belongs to the eukaryotic ribosomal protein eL24 family. As to quaternary structure, part of the 50S ribosomal subunit. Forms a cluster with proteins L3 and L14. It depends on Zn(2+) as a cofactor.

Binds to the 23S rRNA. The polypeptide is Large ribosomal subunit protein eL24 (Staphylothermus marinus (strain ATCC 43588 / DSM 3639 / JCM 9404 / F1)).